We begin with the raw amino-acid sequence, 259 residues long: Haloacid dehalogenase-like hydrolase domain-containing protein 2 (259 aa).

D13 and N15 together coordinate Mg(2+). Residues 13–15 (DLN) and 46–47 (TN) contribute to the substrate site. Residues 47-72 (NTTKESKKDLLERLKKLEFEISEDEI) are a coiled coil. At K50 the chain carries N6-succinyllysine. K179 contacts substrate. D204 contacts Mg(2+).

This sequence belongs to the HAD-like hydrolase superfamily. It depends on Mg(2+) as a cofactor.

This chain is Haloacid dehalogenase-like hydrolase domain-containing protein 2 (Hdhd2), found in Mus musculus (Mouse).